The primary structure comprises 448 residues: Deoxyguanosinetriphosphate triphosphohydrolase-like protein (448 aa).

The HD domain occupies 67-260 (RLTHSLEVSQ…MELADDIAYG (194 aa)).

The protein belongs to the dGTPase family. Type 2 subfamily.

The chain is Deoxyguanosinetriphosphate triphosphohydrolase-like protein from Aliivibrio fischeri (strain MJ11) (Vibrio fischeri).